The following is a 159-amino-acid chain: Transcription elongation factor GreA (159 aa).

It belongs to the GreA/GreB family.

Functionally, necessary for efficient RNA polymerase transcription elongation past template-encoded arresting sites. The arresting sites in DNA have the property of trapping a certain fraction of elongating RNA polymerases that pass through, resulting in locked ternary complexes. Cleavage of the nascent transcript by cleavage factors such as GreA or GreB allows the resumption of elongation from the new 3'terminus. GreA releases sequences of 2 to 3 nucleotides. The sequence is that of Transcription elongation factor GreA from Buchnera aphidicola subsp. Cinara cedri (strain Cc).